The chain runs to 340 residues: Putative D-lactate dehydrogenase (340 aa).

Residues N153–I154, D174, T206–P207, V233–R235, and D259 contribute to the NAD(+) site. The active site involves R235. The active site involves E264. Residue H296 is the Proton donor of the active site.

Belongs to the D-isomer specific 2-hydroxyacid dehydrogenase family.

The catalysed reaction is (R)-lactate + NAD(+) = pyruvate + NADH + H(+). In Dictyostelium discoideum (Social amoeba), this protein is Putative D-lactate dehydrogenase (ldhA).